We begin with the raw amino-acid sequence, 396 residues long: 3-hydroxykynurenine transaminase (396 aa).

The tract at residues 43-44 is binds to and confers specificity for 3-hydroxykynurenine; shared with dimeric partner; that stretch reads SN. Pyridoxal 5'-phosphate-binding positions include 77–79, Ser154, and Gln204; that span reads SAH. Ser154 provides a ligand contact to substrate. Lys205 carries the N6-(pyridoxal phosphate)lysine modification. Residues Tyr256 and Thr259 each coordinate pyridoxal 5'-phosphate. Arg356 serves as a coordination point for substrate.

The protein belongs to the class-V pyridoxal-phosphate-dependent aminotransferase family. Homodimer. Pyridoxal 5'-phosphate serves as cofactor. Expressed in gut and ovaries.

Its subcellular location is the peroxisome. It catalyses the reaction L-kynurenine + glyoxylate = kynurenate + glycine + H2O. It carries out the reaction 3-hydroxy-L-kynurenine + glyoxylate = xanthurenate + glycine + H2O. The catalysed reaction is 3-hydroxy-L-kynurenine + pyruvate = xanthurenate + L-alanine + H2O. The enzyme catalyses glyoxylate + L-alanine = glycine + pyruvate. The protein operates within amino-acid degradation; L-kynurenine degradation; kynurenate from L-kynurenine: step 1/2. Catalyzes the pyridoxal 5'-phosphate-dependent transamination of both 3-hydroxykynurenine and L-kynurenine to xanthurenic acid and kynurenic acid, respectively, preferentially using the alpha-ketoacid glyoxylate as the amino group acceptor. Although glyoxylate is the preferred amino group acceptor, transamination of 3-hydroxykynurenine also works with pyruvate as the amino acceptor in vitro. Involved in the detoxification of cytotoxic metabolite 3-hydroxykynurenine generated by the hydroxylation of L-kynurenine, an intermediate in the tryptophan catabolism pathway. The Plasmodium parasite uses xanthurenic acid produced in the midgut to activate its gametocytes ingested during a blood meal. Also catalyzes, although with a lesser efficiency, the transamination of alanine with glyoxylate as an amino group acceptor. May play a role in the detoxification of glyoxylate, a toxic plant metabolite from the diet. In Anopheles gambiae (African malaria mosquito), this protein is 3-hydroxykynurenine transaminase.